A 427-amino-acid polypeptide reads, in one-letter code: UPF0597 protein CPR_0790 (427 aa).

Belongs to the UPF0597 family.

The sequence is that of UPF0597 protein CPR_0790 from Clostridium perfringens (strain SM101 / Type A).